We begin with the raw amino-acid sequence, 380 residues long: Acid phosphatase-like protein XcAP-3 (380 aa).

The signal sequence occupies residues M1–A19. 3 cysteine pairs are disulfide-bonded: C147–C374, C167–C221, and C347–C351.

It belongs to the histidine acid phosphatase family.

The protein resides in the secreted. Probably modulates blood feeding of fleas on vertebrate species by binding and sequestering different mediators involved in the host response. Binds histamine. Binds leukotriene C4. Does not bind serotonin, adrenaline, noradrenaline, leukotriene B4, leukotriene D4, leukotriene E4, ADP, and stable analogs of thromboxane A2: U-46619 and cTXA2. In Xenopsylla cheopis (Oriental rat flea), this protein is Acid phosphatase-like protein XcAP-3.